We begin with the raw amino-acid sequence, 511 residues long: Maturase K (511 aa).

It belongs to the intron maturase 2 family. MatK subfamily.

It localises to the plastid. The protein localises to the chloroplast. Functionally, usually encoded in the trnK tRNA gene intron. Probably assists in splicing its own and other chloroplast group II introns. The sequence is that of Maturase K from Oryza nivara (Indian wild rice).